Consider the following 463-residue polypeptide: MAKDMDTIVSLAKHRGFVFPGSDIYGGLSNTWDYGPLGVELKNNVKKAWWQKFITQSPFNIGIDAAILMNPKVWEASGHLNNFNDPMIDNKDSKIRYRADKLIEDYMQDVKGDENFIADGLSFEQMKKIIDDEGIVCPVSKTANWTEIRQFNLMFKTFQGVTEDSTNEIFLRPETAQGIFVNYKNVQRSMRKKLPFGIGQIGKSFRNEITPGNFIFRTREFEQMELEFFCKPGEEIEWQNYWKTFASDWLTSLNMSSENMRLRDHDEDELSHYSNATTDIEYKFPFGWGELWGIASRTDFDLRKHAEHSGEDFRYHDPETNEKYIPYCIEPSLGADRVTLAFLCDAYDEEGVEGSKDARTVLHFHPALAPYKAAILPLSKKLSGEAIKIFEQLSSKFSIDFDESQSIGKRYRRQDEIGTPYCVTFDFDSLEDNQVTVRDRDSMEQVRMPISELEAFLTEKTKF.

Arg98 and Glu174 together coordinate substrate. ATP is bound by residues Arg206–Glu208, Phe216–Phe221, Glu290–Leu291, and Gly334–Arg337. Phe221–Glu225 lines the substrate pocket. Substrate is bound at residue Glu330 to Gly334.

Belongs to the class-II aminoacyl-tRNA synthetase family. As to quaternary structure, homodimer.

Its subcellular location is the cytoplasm. It catalyses the reaction tRNA(Gly) + glycine + ATP = glycyl-tRNA(Gly) + AMP + diphosphate. Catalyzes the attachment of glycine to tRNA(Gly). This chain is Glycine--tRNA ligase, found in Staphylococcus aureus (strain bovine RF122 / ET3-1).